The following is a 399-amino-acid chain: E3 ubiquitin-protein ligase APD4 (399 aa).

2 consecutive transmembrane segments (helical) span residues 42–62 (FGIIMGLWFFASVCLIFGVYG) and 284–304 (LIAYGSFTGVLLSFMLVAIHF). An RING-type zinc finger spans residues 348-387 (CAICFDAPRDCCFLPCGHCVSCYQCGTKIKRTKGRCPICR).

As to expression, expressed in the shoot apical meristems (SAM), root tips and inflorescences.

It is found in the endomembrane system. It localises to the vacuole membrane. The enzyme catalyses S-ubiquitinyl-[E2 ubiquitin-conjugating enzyme]-L-cysteine + [acceptor protein]-L-lysine = [E2 ubiquitin-conjugating enzyme]-L-cysteine + N(6)-ubiquitinyl-[acceptor protein]-L-lysine.. Its pathway is protein modification; protein ubiquitination. Functionally, involved in pollen mitosis II (PMII) regulation during male gametogenesis. The polypeptide is E3 ubiquitin-protein ligase APD4 (Arabidopsis thaliana (Mouse-ear cress)).